A 308-amino-acid chain; its full sequence is Cysteine synthase (308 aa).

Lysine 45 carries the post-translational modification N6-(pyridoxal phosphate)lysine. Pyridoxal 5'-phosphate-binding positions include asparagine 75, glycine 179–threonine 183, and serine 267.

The protein belongs to the cysteine synthase/cystathionine beta-synthase family. Homodimer. Forms CymR(2):CysK(2) or CymR(4):CysK(4) complexes in the absence of O-acetylserine. The cofactor is pyridoxal 5'-phosphate.

It catalyses the reaction O-acetyl-L-serine + hydrogen sulfide = L-cysteine + acetate. It participates in amino-acid biosynthesis; L-cysteine biosynthesis; L-cysteine from L-serine: step 2/2. Functionally, catalyzes the conversion of O-acetylserine to cysteine. Also acts as a sensor of cysteine availability in the signal transduction pathway modulating CymR activity. When cysteine is present, the pool of O-acetylserine (OAS) is low, which leads to the formation of a CymR-CysK complex and transcriptional repression of the CymR regulon occurs. In the absence of cysteine, the OAS pool is high and the CymR-CysK complex is mostly dissociated, leading to a faster dissociation of CymR from its DNA targets and the lifting of CymR-dependent repression. The chain is Cysteine synthase (cysK) from Bacillus subtilis (strain 168).